We begin with the raw amino-acid sequence, 663 residues long: DNA topoisomerase 4 subunit B (663 aa).

ATP-binding positions include tyrosine 7, asparagine 47, aspartate 74, glycine 114–alanine 120, and lysine 341. The interval arginine 386–alanine 416 is disordered. Positions glutamate 387–serine 398 are enriched in basic and acidic residues. A Toprim domain is found at asparagine 424 to proline 538. Residues glutamate 430, aspartate 503, and aspartate 505 each coordinate Mg(2+).

The protein belongs to the type II topoisomerase family. ParE type 2 subfamily. As to quaternary structure, heterotetramer composed of ParC and ParE. Mg(2+) is required as a cofactor. It depends on Mn(2+) as a cofactor. The cofactor is Ca(2+).

It catalyses the reaction ATP-dependent breakage, passage and rejoining of double-stranded DNA.. Functionally, topoisomerase IV is essential for chromosome segregation. It relaxes supercoiled DNA. Performs the decatenation events required during the replication of a circular DNA molecule. The protein is DNA topoisomerase 4 subunit B of Staphylococcus aureus (strain NCTC 8325 / PS 47).